The sequence spans 212 residues: UPF0502 protein ECA2523 (212 aa).

This sequence belongs to the UPF0502 family.

This chain is UPF0502 protein ECA2523, found in Pectobacterium atrosepticum (strain SCRI 1043 / ATCC BAA-672) (Erwinia carotovora subsp. atroseptica).